Here is a 186-residue protein sequence, read N- to C-terminus: GTP cyclohydrolase 1 2 (186 aa).

It belongs to the GTP cyclohydrolase I family. Homomer.

The enzyme catalyses GTP + H2O = 7,8-dihydroneopterin 3'-triphosphate + formate + H(+). Its pathway is cofactor biosynthesis; 7,8-dihydroneopterin triphosphate biosynthesis; 7,8-dihydroneopterin triphosphate from GTP: step 1/1. The sequence is that of GTP cyclohydrolase 1 2 from Pseudomonas putida (strain ATCC 47054 / DSM 6125 / CFBP 8728 / NCIMB 11950 / KT2440).